We begin with the raw amino-acid sequence, 112 residues long: Probable prefoldin subunit 1 (112 aa).

It belongs to the prefoldin subunit beta family. As to quaternary structure, heterohexamer of two PFD-alpha type and four PFD-beta type subunits.

Binds specifically to cytosolic chaperonin (c-CPN) and transfers target proteins to it. Binds to nascent polypeptide chain and promotes folding in an environment in which there are many competing pathways for nonnative proteins. The chain is Probable prefoldin subunit 1 from Schizosaccharomyces pombe (strain 972 / ATCC 24843) (Fission yeast).